Here is a 529-residue protein sequence, read N- to C-terminus: UDP-glucuronosyltransferase 2B28 (529 aa).

Residues 1 to 24 (MALKWTSVLLLIHLGCYFSSGSCG) form the signal peptide. Lys135 is subject to N6-succinyllysine. A glycan (N-linked (GlcNAc...) asparagine) is linked at Asn315. The helical transmembrane segment at 495–517 (GFLLACVATVIFVVTKFCLFCFW) threads the bilayer.

Belongs to the UDP-glycosyltransferase family. In terms of tissue distribution, expressed in the liver, breast and kidney.

Its subcellular location is the endoplasmic reticulum membrane. The protein resides in the cytoplasm. It is found in the perinuclear region. It carries out the reaction glucuronate acceptor + UDP-alpha-D-glucuronate = acceptor beta-D-glucuronoside + UDP + H(+). UDP-glucuronosyltransferase (UGT) that catalyzes phase II biotransformation reactions in which lipophilic substrates are conjugated with glucuronic acid to increase the metabolite's water solubility, thereby facilitating excretion into either the urine or bile. Essential for the elimination and detoxification of drugs, xenobiotics and endogenous compounds. Catalyzes the glucuronidation of endogenous steroid hormones such as androgens (androsterone, 3alpha-androstanediol) and estrogens (estradiol, estrone). Catalyzes the glucuronidation of bile acid substrates, which are natural detergents for dietary lipids absorption. Displays glucuronidation activity toward the phenolic compounds eugenol. Its function is as follows. Lack UDP-glucuronosyltransferase (UGT) activity. The polypeptide is UDP-glucuronosyltransferase 2B28 (Homo sapiens (Human)).